A 197-amino-acid chain; its full sequence is Proteasome subunit beta 1 (197 aa).

The propeptide at 1–6 (MNRKTG) is removed in mature form; by autocatalysis. The active-site Nucleophile is the Thr-7.

It belongs to the peptidase T1B family. The 20S proteasome core is composed of 14 alpha and 14 beta subunits that assemble into four stacked heptameric rings, resulting in a barrel-shaped structure. The two inner rings, each composed of seven catalytic beta subunits, are sandwiched by two outer rings, each composed of seven alpha subunits. The catalytic chamber with the active sites is on the inside of the barrel. Has a gated structure, the ends of the cylinder being occluded by the N-termini of the alpha-subunits. Is capped at one or both ends by the proteasome regulatory ATPase, PAN.

The protein resides in the cytoplasm. It catalyses the reaction Cleavage of peptide bonds with very broad specificity.. The formation of the proteasomal ATPase PAN-20S proteasome complex, via the docking of the C-termini of PAN into the intersubunit pockets in the alpha-rings, triggers opening of the gate for substrate entry. Interconversion between the open-gate and close-gate conformations leads to a dynamic regulation of the 20S proteasome proteolysis activity. Its function is as follows. Component of the proteasome core, a large protease complex with broad specificity involved in protein degradation. The polypeptide is Proteasome subunit beta 1 (Pyrococcus abyssi (strain GE5 / Orsay)).